We begin with the raw amino-acid sequence, 317 residues long: Acetyl-coenzyme A carboxylase carboxyl transferase subunit alpha (317 aa).

The region spanning 40-293 (LEGRVRDAMM…GTVIADALKE (254 aa)) is the CoA carboxyltransferase C-terminal domain.

The protein belongs to the AccA family. Acetyl-CoA carboxylase is a heterohexamer composed of biotin carboxyl carrier protein (AccB), biotin carboxylase (AccC) and two subunits each of ACCase subunit alpha (AccA) and ACCase subunit beta (AccD).

It is found in the cytoplasm. It catalyses the reaction N(6)-carboxybiotinyl-L-lysyl-[protein] + acetyl-CoA = N(6)-biotinyl-L-lysyl-[protein] + malonyl-CoA. Its pathway is lipid metabolism; malonyl-CoA biosynthesis; malonyl-CoA from acetyl-CoA: step 1/1. Component of the acetyl coenzyme A carboxylase (ACC) complex. First, biotin carboxylase catalyzes the carboxylation of biotin on its carrier protein (BCCP) and then the CO(2) group is transferred by the carboxyltransferase to acetyl-CoA to form malonyl-CoA. The chain is Acetyl-coenzyme A carboxylase carboxyl transferase subunit alpha from Sinorhizobium fredii (strain NBRC 101917 / NGR234).